The chain runs to 125 residues: Small ribosomal subunit protein uS12 (125 aa).

Positions 1–28 (MPTISQLIGSERKRLTRKTKSPALKSCP) are disordered. A 3-methylthioaspartic acid modification is found at Asp-89. The tract at residues 104–125 (TAGVKDRRQSRSKYGAKAPKND) is disordered.

The protein belongs to the universal ribosomal protein uS12 family. As to quaternary structure, part of the 30S ribosomal subunit. Contacts proteins S8 and S17. May interact with IF1 in the 30S initiation complex.

In terms of biological role, with S4 and S5 plays an important role in translational accuracy. Interacts with and stabilizes bases of the 16S rRNA that are involved in tRNA selection in the A site and with the mRNA backbone. Located at the interface of the 30S and 50S subunits, it traverses the body of the 30S subunit contacting proteins on the other side and probably holding the rRNA structure together. The combined cluster of proteins S8, S12 and S17 appears to hold together the shoulder and platform of the 30S subunit. This chain is Small ribosomal subunit protein uS12, found in Prochlorococcus marinus subsp. pastoris (strain CCMP1986 / NIES-2087 / MED4).